The sequence spans 396 residues: Chalcone synthase A (396 aa).

Cys-170 is an active-site residue.

The protein belongs to the thiolase-like superfamily. Chalcone/stilbene synthases family.

The catalysed reaction is (E)-4-coumaroyl-CoA + 3 malonyl-CoA + 3 H(+) = 2',4,4',6'-tetrahydroxychalcone + 3 CO2 + 4 CoA. It functions in the pathway secondary metabolite biosynthesis; flavonoid biosynthesis. Its function is as follows. The primary product of this enzyme is 4,2',4',6'-tetrahydroxychalcone (also termed naringenin-chalcone or chalcone) which can under specific conditions spontaneously isomerize into naringenin. The polypeptide is Chalcone synthase A (CHSA) (Ipomoea purpurea (Common morning glory)).